Here is a 209-residue protein sequence, read N- to C-terminus: Large ribosomal subunit protein uL3 (209 aa).

At Q150 the chain carries N5-methylglutamine.

It belongs to the universal ribosomal protein uL3 family. As to quaternary structure, part of the 50S ribosomal subunit. Forms a cluster with proteins L14 and L19. In terms of processing, methylated by PrmB.

Functionally, one of the primary rRNA binding proteins, it binds directly near the 3'-end of the 23S rRNA, where it nucleates assembly of the 50S subunit. The sequence is that of Large ribosomal subunit protein uL3 from Vibrio cholerae serotype O1 (strain ATCC 39541 / Classical Ogawa 395 / O395).